The following is a 371-amino-acid chain: N-acetyllactosaminide alpha-2,3-sialyltransferase (371 aa).

Glycine 255 is a binding site for CMP-N-acetyl-beta-neuraminate. Aspartate 258 functions as the Proton acceptor in the catalytic mechanism. Residues 278–282, 299–300, and 322–323 contribute to the CMP-N-acetyl-beta-neuraminate site; these read APHPR, IE, and SG. The Proton donor role is filled by histidine 280.

Belongs to the glycosyltransferase 52 family. Homodimer.

It is found in the cell outer membrane. The catalysed reaction is a beta-D-galactosyl-(1-&gt;4)-N-acetyl-beta-D-glucosaminyl derivative + CMP-N-acetyl-beta-neuraminate = an N-acetyl-alpha-neuraminyl-(2-&gt;3)-beta-D-galactosyl-(1-&gt;4)-N-acetyl-beta-D-glucosaminyl derivative + CMP + H(+). The protein operates within bacterial outer membrane biogenesis; lipooligosaccharide biosynthesis. Catalyzes the transfer of sialic acid from the substrate CMP-N-acetylneuraminate to the terminal galactose residue of the lacto-N-neotetraose branch of surface lipooligosaccharide (LOS), forming an alpha-2,3-sialyl linkage. Thus, functions in the sialylation of LOS, which plays a role in the evasion of the host immune response by protecting N.meningitidis from complement-mediated serum killing and from phagocytic killing by neutrophils. In Neisseria meningitidis serogroup A / serotype 4A (strain DSM 15465 / Z2491), this protein is N-acetyllactosaminide alpha-2,3-sialyltransferase.